The sequence spans 371 residues: Macronuclear solute carrier homolog CR-MSC (371 aa).

Solcar repeat units lie at residues 16–111 (RMNY…FYDK), 120–208 (ARPD…CKEN), and 215–304 (PHWI…LSQF). 6 consecutive transmembrane segments (helical) span residues 22-42 (FAAA…LDMV), 89-109 (TFFF…GYFY), 126-146 (VAAG…IDIV), 184-204 (AGAN…IYDW), 221-241 (LWGT…FDMI), and 281-301 (FGSF…ICYL).

The protein belongs to the mitochondrial carrier (TC 2.A.29) family.

It is found in the membrane. This chain is Macronuclear solute carrier homolog CR-MSC, found in Oxytricha trifallax (Sterkiella histriomuscorum).